An 841-amino-acid polypeptide reads, in one-letter code: Protein translocase subunit SecA (841 aa).

ATP-binding positions include 79 to 80 (MF), glutamine 85, 103 to 107 (GEGKT), and aspartate 492. The segment at 786–813 (REEVVQGQTTAHQPQEGDDNKKAKKAPV) is disordered. Zn(2+) is bound by residues cysteine 825, cysteine 827, cysteine 836, and cysteine 837.

The protein belongs to the SecA family. Part of the essential Sec protein translocation apparatus which comprises SecA, SecYEG and auxiliary proteins SecDF. Other proteins may be involved. Monomer and many different homodimers can be isolated, some of which are not formed in the presence of a synthetic signal peptide. A single SecA monomer interacts with SecY in the channel. Only shows some colocalization with FloA or FloT membrane assemblies. The cofactor is Zn(2+).

Its subcellular location is the cell membrane. It localises to the cytoplasm. The protein localises to the membrane raft. The catalysed reaction is ATP + H2O + cellular proteinSide 1 = ADP + phosphate + cellular proteinSide 2.. In terms of biological role, part of the Sec protein translocase complex. Interacts with the SecYEG preprotein conducting channel. Has a central role in coupling the hydrolysis of ATP to the transfer of proteins into and across the cell membrane, serving as an ATP-driven molecular motor driving the stepwise translocation of polypeptide chains across the membrane. The chain is Protein translocase subunit SecA from Bacillus subtilis (strain 168).